Here is a 546-residue protein sequence, read N- to C-terminus: Pectinesterase 1 (546 aa).

The first 39 residues, 1 to 39, serve as a signal peptide directing secretion; the sequence is MANPQQPLLIKTHKQNPIISFKILSFVITLFVALFLVAP. The propeptide occupies 40 to 229; that stretch reads YQVEIKHSNL…RKLMESSGKD (190 aa). Threonine 308 and glutamine 338 together coordinate substrate. An intrachain disulfide couples cysteine 327 to cysteine 354. The active-site Proton donor is the aspartate 361. Aspartate 382 (nucleophile) is an active-site residue. Residues cysteine 395 and cysteine 429 are joined by a disulfide bond. Residues arginine 450 and tryptophan 452 each coordinate substrate.

It in the N-terminal section; belongs to the PMEI family. The protein in the C-terminal section; belongs to the pectinesterase family.

The protein localises to the secreted. It localises to the cell wall. The enzyme catalyses [(1-&gt;4)-alpha-D-galacturonosyl methyl ester](n) + n H2O = [(1-&gt;4)-alpha-D-galacturonosyl](n) + n methanol + n H(+). It participates in glycan metabolism; pectin degradation; 2-dehydro-3-deoxy-D-gluconate from pectin: step 1/5. Functionally, pectinesterase may play a role in cell wall metabolism during fruit growth and development prior to ripening and may be required for preparing cell walls for softening by polygalacturonase during fruit ripening. The sequence is that of Pectinesterase 1 (PME1.9) from Solanum lycopersicum (Tomato).